A 438-amino-acid chain; its full sequence is UDP-N-acetylmuramoylalanine--D-glutamate ligase (438 aa).

112–118 (GSNGKST) contributes to the ATP binding site.

The protein belongs to the MurCDEF family.

Its subcellular location is the cytoplasm. It carries out the reaction UDP-N-acetyl-alpha-D-muramoyl-L-alanine + D-glutamate + ATP = UDP-N-acetyl-alpha-D-muramoyl-L-alanyl-D-glutamate + ADP + phosphate + H(+). Its pathway is cell wall biogenesis; peptidoglycan biosynthesis. Cell wall formation. Catalyzes the addition of glutamate to the nucleotide precursor UDP-N-acetylmuramoyl-L-alanine (UMA). The sequence is that of UDP-N-acetylmuramoylalanine--D-glutamate ligase from Yersinia pseudotuberculosis serotype I (strain IP32953).